The sequence spans 49 residues: uncharacterized protein (49 aa).

A signal peptide spans M1–S22.

This is an uncharacterized protein from Saccharomyces cerevisiae (strain ATCC 204508 / S288c) (Baker's yeast).